Consider the following 64-residue polypeptide: Conotoxin Pu3.4 (64 aa).

A signal peptide spans 1–16; the sequence is LGVLLPICLLLFPLTA. The propeptide occupies 17–49; it reads LPLDGDQPADRPAERMQDDFITEQHPLFDPVKR. 3 disulfide bridges follow: Cys-50/Cys-63, Cys-51/Cys-59, and Cys-55/Cys-62. Pro-61 is modified (4-hydroxyproline).

This sequence belongs to the conotoxin M superfamily. Expressed by the venom duct.

It is found in the secreted. In Conus pulicarius (Flea-bitten cone), this protein is Conotoxin Pu3.4.